Reading from the N-terminus, the 196-residue chain is Adenylate kinase (196 aa).

Residue 9 to 17 participates in ATP binding; that stretch reads GIPGVGKST.

It belongs to the archaeal adenylate kinase family.

Its subcellular location is the cytoplasm. It carries out the reaction AMP + ATP = 2 ADP. The protein is Adenylate kinase (adkA) of Pyrococcus horikoshii (strain ATCC 700860 / DSM 12428 / JCM 9974 / NBRC 100139 / OT-3).